The chain runs to 540 residues: Malolactic enzyme (540 aa).

The Proton donor role is filled by Tyr90. Residue Lys163 is the Proton acceptor of the active site. Residue Lys163 coordinates substrate. Glu234, Asp235, and Asp258 together coordinate Mn(2+). NAD(+)-binding positions include 291–294 (GGSA), Asn403, and Asn448. Asn448 is a binding site for substrate.

It belongs to the malic enzymes family. As to quaternary structure, homodimer. It depends on Mn(2+) as a cofactor. The cofactor is NAD(+).

It carries out the reaction (S)-malate + H(+) = (S)-lactate + CO2. Functionally, involved in the malolactic fermentation (MLF) of wine, which results in a natural decrease in acidity and favorable changes in wine flavors. Catalyzes the decarboxylation of L-malate to L-lactate. In Lactococcus lactis subsp. lactis (strain IL1403) (Streptococcus lactis), this protein is Malolactic enzyme.